Reading from the N-terminus, the 8515-residue chain is Nonribosomal peptide synthetase 8 (8515 aa).

2 adenylation regions span residues 59-736 and 1163-1705; these read REHH…YRCS and AKLS…EWVE. Residues 587-1159 form a condensation 1 region; it reads RRVVQWLENL…TVGEVALVGD (573 aa). Positions 615–691 constitute a Carrier 1 domain; sequence EPETAMERRL…ELAPRVKVAE (77 aa). At serine 652 the chain carries O-(pantetheine 4'-phosphoryl)serine. Positions 1732–1808 constitute a Carrier 2 domain; the sequence is RGLTPTETVI…KLGRHADHSS (77 aa). Residue serine 1769 is modified to O-(pantetheine 4'-phosphoryl)serine. The segment at 1830–2273 is epimerase 1; sequence LSPIQQWFFE…TLYDCPLAAL (444 aa). The interval 2301 to 2709 is condensation 2; it reads SHIQEGILLS…RSPEAVLHDL (409 aa). Residues 2733-3266 are adenylation 3; the sequence is QCLHWLIEQW…RMILSWLSEP (534 aa). Positions 3286–3362 constitute a Carrier 3 domain; sequence TTLGPVEKQM…KVTPRTISLS (77 aa). O-(pantetheine 4'-phosphoryl)serine is present on serine 3323. The interval 3406–3819 is condensation 3; the sequence is SPMQEGILLA…DNSGCSVKTV (414 aa). In terms of domain architecture, Carrier 4 spans 3857 to 3933; the sequence is EPTNLIALTV…EVFEHARFSD (77 aa). Serine 3894 is subject to O-(pantetheine 4'-phosphoryl)serine. The epimerase 2 stretch occupies residues 3953-4392; sequence LSPIQKLHFH…TPSDFQLLSL (440 aa). The interval 4420–4823 is condensation 4; sequence PCSPMQEGIL…ARPRARLGTI (404 aa). The segment at 4837–5363 is adenylation 4; that stretch reads WNEQARRPVV…RKVNKWLESF (527 aa). The Carrier 5 domain occupies 5385–5461; sequence PPLTPIQQTI…SLAACATAII (77 aa). Serine 5422 is modified (O-(pantetheine 4'-phosphoryl)serine). Residues 5508 to 5923 are condensation 5; it reads SPMQEGILFS…SLVDHLSLCS (416 aa). An adenylation 5 region spans residues 5941 to 6459; it reads ELRQCLHELI…GKVDRQALRR (519 aa). Positions 6482–6558 constitute a Carrier 6 domain; that stretch reads PISTAEEQQM…DLATLLESPA (77 aa). The residue at position 6519 (serine 6519) is an O-(pantetheine 4'-phosphoryl)serine. The condensation 6 stretch occupies residues 6606–6992; the sequence is CTPLQESLMA…SQMKSVMGTL (387 aa). Residues 7030–7544 form an adenylation 6 region; the sequence is VEDLIISRAQ…SSGKLARKGV (515 aa). One can recognise a Carrier 7 domain in the interval 7575–7651; it reads IASSSVERAI…HLASREDLTA (77 aa). Serine 7612 carries the O-(pantetheine 4'-phosphoryl)serine modification. An epimerase 3 region spans residues 7670–8119; sequence LTPIQRFFFC…DYPRARLDYT (450 aa). The segment at 8164–8504 is condensation 7; it reads HFIWKIAGTK…DPTSPLQFAD (341 aa). A compositionally biased stretch (polar residues) spans 8488–8500; that stretch reads AVNSVSSDPTSPL. The interval 8488-8515 is disordered; it reads AVNSVSSDPTSPLQFADGQDPMPVSHQP.

This sequence belongs to the NRP synthetase family.

In terms of biological role, nonribosomal peptide synthesis (NRPS) is a key mechanism responsible for the biosynthesis of bioactive metabolites which are potentially contributing to organismal virulence. However, contarary to other nonribosomal peptide synthases, NRPS8 does not encode a secreted peptide, but has more a structural role since it is involved in germ tube formation. The polypeptide is Nonribosomal peptide synthetase 8 (NRPS8) (Aspergillus fumigatus (strain ATCC MYA-4609 / CBS 101355 / FGSC A1100 / Af293) (Neosartorya fumigata)).